Reading from the N-terminus, the 176-residue chain is Putative phosphohydrolase YueE (176 aa).

One can recognise an HD domain in the interval 23-139 (GVAHAIACAY…VKKADELDEE (117 aa)).

This Bacillus subtilis (strain 168) protein is Putative phosphohydrolase YueE (yueE).